The chain runs to 717 residues: HHIP-like protein 2 (717 aa).

The signal sequence occupies residues methionine 1–glycine 40. 4 disulfides stabilise this stretch: cysteine 203–cysteine 545, cysteine 207–cysteine 551, cysteine 423–cysteine 441, and cysteine 508–cysteine 607. Residues alanine 642–proline 717 are disordered. Over residues serine 646–glycine 662 the composition is skewed to polar residues. An N-linked (GlcNAc...) asparagine glycan is attached at asparagine 647. The segment covering serine 672–arginine 687 has biased composition (basic residues).

This sequence belongs to the HHIP family.

It is found in the secreted. The polypeptide is HHIP-like protein 2 (Hhipl2) (Mus musculus (Mouse)).